The following is a 353-amino-acid chain: Rhodopsin (353 aa).

The Extracellular segment spans residues 1–36 (MNGTEGPYFYIPMVNTTGIVRSPYEYPQYYLVNPAA). Residues Asn-2 and Asn-15 are each glycosylated (N-linked (GlcNAc...) asparagine). A helical transmembrane segment spans residues 37-61 (YAALGAYMFLLILIGFPVNFLTLYV). Topologically, residues 62-73 (TIEHKKLRTPLN) are cytoplasmic. A helical transmembrane segment spans residues 74–96 (YILLNLAVADLFMVFGGFTTTMY). The Extracellular portion of the chain corresponds to 97–110 (TSMHGYFVLGRLGC). Cys-110 and Cys-187 are oxidised to a cystine. Residues 111–133 (NLEGFFATLGGEIALWSLVVLAV) traverse the membrane as a helical segment. A 'Ionic lock' involved in activated form stabilization motif is present at residues 134-136 (ERW). At 134-152 (ERWMVVCKPISNFRFGEDH) the chain is on the cytoplasmic side. Residues 153–173 (AIMGLAFTWVMAAACAVPPLV) traverse the membrane as a helical segment. Residues 174–202 (GWSRYIPEGMQCSCGIDYYTRAEGFNNES) are Extracellular-facing. N-linked (GlcNAc...) asparagine glycosylation is present at Asn-200. A helical transmembrane segment spans residues 203 to 224 (FVIYMFVCHFLIPLVVVFFCYG). At 225–252 (RLLCAVKEAAAAQQESETTQRAEREVSR) the chain is on the cytoplasmic side. A helical membrane pass occupies residues 253 to 274 (MVVIMVVAFLVCWCPYAGVAWY). At 275-286 (IFTHQGSEFGPL) the chain is on the extracellular side. A helical membrane pass occupies residues 287–308 (FMTFPAFFAKSSSIYNPMIYIC). An N6-(retinylidene)lysine modification is found at Lys-296. Residues 309-353 (MNKQFRQCMITTLCCGKNPFEEEEGASTTSKTEASSVSSSSVSPA) are Cytoplasmic-facing. Residues Cys-322 and Cys-323 are each lipidated (S-palmitoyl cysteine). A disordered region spans residues 329–353 (EEEEGASTTSKTEASSVSSSSVSPA). Over residues 334 to 353 (ASTTSKTEASSVSSSSVSPA) the composition is skewed to low complexity.

It belongs to the G-protein coupled receptor 1 family. Opsin subfamily. Post-translationally, phosphorylated on some or all of the serine and threonine residues present in the C-terminal region. In terms of processing, contains one covalently linked retinal chromophore.

It localises to the membrane. The protein localises to the cell projection. Its subcellular location is the cilium. The protein resides in the photoreceptor outer segment. Photoreceptor required for image-forming vision at low light intensity. While most salt water fish species use retinal as chromophore, most freshwater fish use 3-dehydroretinal, or a mixture of retinal and 3-dehydroretinal. Light-induced isomerization of 11-cis to all-trans retinal triggers a conformational change that activates signaling via G-proteins. Subsequent receptor phosphorylation mediates displacement of the bound G-protein alpha subunit by arrestin and terminates signaling. The protein is Rhodopsin (rho) of Chelon auratus (Golden grey mullet).